A 482-amino-acid chain; its full sequence is Succinate-semialdehyde dehydrogenase [NADP(+)] GabD (482 aa).

Residues 156–157 (WN), 180–183 (KPAS), and 233–234 (GS) each bind NADP(+). E255 (proton acceptor) is an active-site residue. L256 serves as a coordination point for NADP(+). The active-site Nucleophile is C289. Residue E386 participates in NADP(+) binding.

It belongs to the aldehyde dehydrogenase family. As to quaternary structure, homotetramer.

The catalysed reaction is succinate semialdehyde + NADP(+) + H2O = succinate + NADPH + 2 H(+). It carries out the reaction 5-oxopentanoate + NADP(+) + H2O = glutarate + NADPH + 2 H(+). It participates in amino-acid degradation; 4-aminobutanoate degradation. It functions in the pathway amino-acid degradation. Functionally, catalyzes the NADP(+)-dependent oxidation of succinate semialdehyde to succinate. Thereby functions in a GABA degradation pathway that allows some E.coli strains to utilize GABA as a nitrogen source for growth. Also catalyzes the conversion of glutarate semialdehyde to glutarate, as part of a L-lysine degradation pathway that proceeds via cadaverine, glutarate and L-2-hydroxyglutarate. In Escherichia coli (strain K12), this protein is Succinate-semialdehyde dehydrogenase [NADP(+)] GabD (gabD).